The chain runs to 2104 residues: Protein Ycf2 (2104 aa).

An ATP-binding site is contributed by 1396 to 1403 (GPVETGRS).

The protein belongs to the Ycf2 family.

The protein localises to the plastid. Its subcellular location is the chloroplast stroma. Its function is as follows. Probable ATPase of unknown function. Its presence in a non-photosynthetic plant (Epifagus virginiana) and experiments in tobacco indicate that it has an essential function which is probably not related to photosynthesis. The protein is Protein Ycf2 (ycf2-A) of Adiantum capillus-veneris (Maidenhair fern).